The primary structure comprises 659 residues: MFQNNPLLSQLKQQLHDSKPHVEGVVKGTDKAYGFLETDKETFFIAPPAMKKVMHGDKIKATIETIGDKKQADPEELIEPMLTRFIAKVRFNKDKKLQVLADHPNINQPIGAAQTKAVKEELHEGDWVVATLKTHPLRDDRFFYAQIVEFICRAEDEFAPWWVTLARHQQSRYPVQGQDSYKMLDPQTRKDLTALHFVTIDSESTQDMDDALYIEPLEQNGEQTGWKLTVAIADPTAYIAADSQIEKDARQRCFTNYLPGFNIPMLPRELSDELCSLMENETRAALVCRLQTDLQGELQGKPEFLLADVQSKAKLAYNRVSDYLEQAEGAWQPENETTKQQIHWLHRFALTRINWRKTHGLLFKEKPDYSFVLADNGHVQEIKAEYRRIANQIVEESMIVANICCAHYLADNAKTGIFNTHAGFDKKFLPNAHHFLMTNLSNAQNQDELTVRYSVENLATLEGYCRMRHDIEPIDGDYLEFRLRRFLTFAEFKSELAPHFGLGLTGYATWTSPIRKYSDMVNHRLIKACIAEQACLKPSDDILTRLQEARKQNRMVERDIADWLYCRYLADKVENKPEFQAEVQDCMRGGLRVQLLENGASVFVPASTIHPNKEEIQVNSDELAFYINGERRYKIGDIVNIQLTEVKEETRSLIGNLVL.

Residues 189 to 531 (RKDLTALHFV…NHRLIKACIA (343 aa)) form the RNB domain. Residues 576 to 658 (KPEFQAEVQD…ETRSLIGNLV (83 aa)) form the S1 motif domain.

The protein belongs to the RNR ribonuclease family. RNase II subfamily.

Its subcellular location is the cytoplasm. The enzyme catalyses Exonucleolytic cleavage in the 3'- to 5'-direction to yield nucleoside 5'-phosphates.. Its function is as follows. Involved in mRNA degradation. Hydrolyzes single-stranded polyribonucleotides processively in the 3' to 5' direction. The polypeptide is Exoribonuclease 2 (Actinobacillus succinogenes (strain ATCC 55618 / DSM 22257 / CCUG 43843 / 130Z)).